A 252-amino-acid polypeptide reads, in one-letter code: 2-succinyl-6-hydroxy-2,4-cyclohexadiene-1-carboxylate synthase (252 aa).

Belongs to the AB hydrolase superfamily. MenH family. As to quaternary structure, monomer.

The catalysed reaction is 5-enolpyruvoyl-6-hydroxy-2-succinyl-cyclohex-3-ene-1-carboxylate = (1R,6R)-6-hydroxy-2-succinyl-cyclohexa-2,4-diene-1-carboxylate + pyruvate. The protein operates within quinol/quinone metabolism; 1,4-dihydroxy-2-naphthoate biosynthesis; 1,4-dihydroxy-2-naphthoate from chorismate: step 3/7. Its pathway is quinol/quinone metabolism; menaquinone biosynthesis. Its function is as follows. Catalyzes a proton abstraction reaction that results in 2,5-elimination of pyruvate from 2-succinyl-5-enolpyruvyl-6-hydroxy-3-cyclohexene-1-carboxylate (SEPHCHC) and the formation of 2-succinyl-6-hydroxy-2,4-cyclohexadiene-1-carboxylate (SHCHC). This chain is 2-succinyl-6-hydroxy-2,4-cyclohexadiene-1-carboxylate synthase, found in Salmonella typhi.